The following is a 449-amino-acid chain: Probable aminotransferase TAT1 (449 aa).

A compositionally biased stretch (polar residues) spans 1–12 (MNHNSNLVLPSH). Residues 1-20 (MNHNSNLVLPSHQTETQTQD) are disordered.

It belongs to the class-I pyridoxal-phosphate-dependent aminotransferase family. The cofactor is pyridoxal 5'-phosphate.

The sequence is that of Probable aminotransferase TAT1 from Arabidopsis thaliana (Mouse-ear cress).